We begin with the raw amino-acid sequence, 255 residues long: tRNA pseudouridine synthase A (255 aa).

Asp-52 (nucleophile) is an active-site residue. A substrate-binding site is contributed by Tyr-111.

It belongs to the tRNA pseudouridine synthase TruA family. Homodimer.

The enzyme catalyses uridine(38/39/40) in tRNA = pseudouridine(38/39/40) in tRNA. Formation of pseudouridine at positions 38, 39 and 40 in the anticodon stem and loop of transfer RNAs. This is tRNA pseudouridine synthase A from Cereibacter sphaeroides (strain KD131 / KCTC 12085) (Rhodobacter sphaeroides).